We begin with the raw amino-acid sequence, 570 residues long: Proline--tRNA ligase (570 aa).

This sequence belongs to the class-II aminoacyl-tRNA synthetase family. ProS type 1 subfamily. Homodimer.

It localises to the cytoplasm. It carries out the reaction tRNA(Pro) + L-proline + ATP = L-prolyl-tRNA(Pro) + AMP + diphosphate. Its function is as follows. Catalyzes the attachment of proline to tRNA(Pro) in a two-step reaction: proline is first activated by ATP to form Pro-AMP and then transferred to the acceptor end of tRNA(Pro). As ProRS can inadvertently accommodate and process non-cognate amino acids such as alanine and cysteine, to avoid such errors it has two additional distinct editing activities against alanine. One activity is designated as 'pretransfer' editing and involves the tRNA(Pro)-independent hydrolysis of activated Ala-AMP. The other activity is designated 'posttransfer' editing and involves deacylation of mischarged Ala-tRNA(Pro). The misacylated Cys-tRNA(Pro) is not edited by ProRS. This Pelotomaculum thermopropionicum (strain DSM 13744 / JCM 10971 / SI) protein is Proline--tRNA ligase.